The sequence spans 601 residues: Glutathione-regulated potassium-efflux system protein KefB (601 aa).

13 helical membrane passes run 4-24 (SDFL…VPLA), 29-49 (IGAV…GLGF), 55-75 (EILH…GLEL), 87-107 (IFGV…GLLM), 115-135 (AAVV…LQLM), 152-172 (VLLF…LLAG), 177-197 (HFDW…LIGG), 207-227 (FIAA…LVLG), 230-250 (LFMD…GVLL), 268-288 (GLLL…GVLY), 291-311 (LLWV…VLYL), 324-344 (MQFA…FSTA), and 356-376 (ALLL…MKLV). The RCK N-terminal domain maps to 400 to 519 (KPQVIVVGFG…AGVTQFSRET (120 aa)).

The protein belongs to the monovalent cation:proton antiporter 2 (CPA2) transporter (TC 2.A.37) family. KefB subfamily. In terms of assembly, interacts with the regulatory subunit KefG.

The protein resides in the cell inner membrane. In terms of biological role, pore-forming subunit of a potassium efflux system that confers protection against electrophiles. Catalyzes K(+)/H(+) antiport. The sequence is that of Glutathione-regulated potassium-efflux system protein KefB from Shigella sonnei (strain Ss046).